A 161-amino-acid polypeptide reads, in one-letter code: MDSNVFITIFGEIDVLRSFTDIKSKIKLVRLSCKGASELDEFSSRLCLVVLSTVGLSPFALFDSLVSNSRRTVLIRFKYSTNRGIPARPCKDDVMKQSFPRLIKPTVVYFPILCLESPKTSALRLGAMAYREAAIIKPHETFLISEVGDSVTFFIQDILCL.

In terms of assembly, interacts with ribosomes.

This is an uncharacterized protein from Saccharomyces cerevisiae (strain ATCC 204508 / S288c) (Baker's yeast).